We begin with the raw amino-acid sequence, 187 residues long: 5-formyltetrahydrofolate cyclo-ligase (187 aa).

ATP-binding positions include 6-10 (RQQIR), 139-146 (GMGGGFYD), and Asp178.

The protein belongs to the 5-formyltetrahydrofolate cyclo-ligase family.

The enzyme catalyses (6S)-5-formyl-5,6,7,8-tetrahydrofolate + ATP = (6R)-5,10-methenyltetrahydrofolate + ADP + phosphate. It participates in one-carbon metabolism; tetrahydrofolate interconversion. Functionally, involved in the removal of 5-formyltetrahydrofolate. In vitro, it is a potent inhibitor of various folate-dependent enzymes in the C1 metabolism network and in vivo it might function as a folate storage. 5-formyltetrahydrofolate is also used as an antifolate rescue agent in cancer chemotherapy. Catalyzes the irreversible ATP-dependent transformation of 5-formyltetrahydrofolate (5-CHO-THF) to form 5,10-methenyltetrahydrofolate (5,10-CH=THF). The reverse reaction is catalyzed by the serine hydroxymethyltransferase GlyA (SHMT). In Haemophilus influenzae (strain ATCC 51907 / DSM 11121 / KW20 / Rd), this protein is 5-formyltetrahydrofolate cyclo-ligase.